Reading from the N-terminus, the 835-residue chain is Transcription intermediary factor 1-beta (835 aa).

Low complexity predominate over residues 14–24 (AATAASAASGS). The disordered stretch occupies residues 14 to 57 (AATAASAASGSPGSGEGSAGGEKRPAASSAAAASASASSPAGGG). A phosphoserine mark is found at Ser24, Ser27, and Ser31. Residue Lys36 forms a Glycyl lysine isopeptide (Lys-Gly) (interchain with G-Cter in SUMO2) linkage. A compositionally biased stretch (low complexity) spans 39–53 (AASSAAAASASASSP). The residue at position 52 (Ser52) is a Phosphoserine. The RING-type zinc-finger motif lies at 67–123 (CGVCRERLRPERDPRLLPCLHSACSACLGPATPAAANNSGDGGSAGDGAMVDCPVCK). Residue Lys129 forms a Glycyl lysine isopeptide (Lys-Gly) (interchain with G-Cter in SUMO2) linkage. Phosphoserine is present on Ser140. The B box-type 1; atypical zinc-finger motif lies at 150–197 (DANQCCTSCEDNAPATSYCVECSEPLCETCVEAHQRVKYTKDHTVRST). Residues Cys155, Cys158, Cys179, and His183 each contribute to the Zn(2+) site. Residue Lys201 forms a Glycyl lysine isopeptide (Lys-Gly) (interchain with G-Cter in SUMO2) linkage. The segment at 206–247 (ERTVYCNVHKHEPLVLFCESCDTLTCRDCQLNAHKDHQYQFL) adopts a B box-type 2 zinc-finger fold. Zn(2+) contacts are provided by Cys211, His214, Cys234, and His239. The leucine zipper alpha helical coiled-coil region stretch occupies residues 248–378 (EDAVRNQRKL…LIYFQLHRAL (131 aa)). An interaction with MAGEC2 region spans residues 249 to 378 (DAVRNQRKLL…LIYFQLHRAL (130 aa)). Residues Lys256 and Lys263 each participate in a glycyl lysine isopeptide (Lys-Gly) (interchain with G-Cter in SUMO2) cross-link. Lys268 carries the N6-acetyllysine modification. Lys274 participates in a covalent cross-link: Glycyl lysine isopeptide (Lys-Gly) (interchain with G-Cter in SUMO2). Residue Lys306 is modified to N6-acetyllysine; alternate. A Glycyl lysine isopeptide (Lys-Gly) (interchain with G-Cter in SUMO2); alternate cross-link involves residue Lys306. Lys321 participates in a covalent cross-link: Glycyl lysine isopeptide (Lys-Gly) (interchain with G-Cter in SUMO2). Lys342 bears the N6-acetyllysine mark. A Glycyl lysine isopeptide (Lys-Gly) (interchain with G-Cter in SUMO2) cross-link involves residue Lys368. The tract at residues 368 to 372 (KLIYF) is involved in binding PPP1CA. The residue at position 379 (Lys379) is an N6-acetyllysine; alternate. Lys379 participates in a covalent cross-link: Glycyl lysine isopeptide (Lys-Gly) (interchain with G-Cter in SUMO2); alternate. A Glycyl lysine isopeptide (Lys-Gly) (interchain with G-Cter in SUMO1); alternate cross-link involves residue Lys379. Lys409 is covalently cross-linked (Glycyl lysine isopeptide (Lys-Gly) (interchain with G-Cter in SUMO2)). Positions 413–481 (ERPGTNSTGP…SRSGEGEVSG (69 aa)) are disordered. The residue at position 419 (Ser419) is a Phosphoserine. A Glycyl lysine isopeptide (Lys-Gly) (interchain with G-Cter in SUMO2) cross-link involves residue Lys436. The span at 436-445 (KQGSGSSQPM) shows a compositional bias: polar residues. Phosphoserine is present on residues Ser439 and Ser441. Residue Lys470 forms a Glycyl lysine isopeptide (Lys-Gly) (interchain with G-Cter in SUMO2); alternate linkage. Lys470 participates in a covalent cross-link: Glycyl lysine isopeptide (Lys-Gly) (interchain with G-Cter in SUMO1); alternate. Residue Arg471 is modified to Citrulline. Phosphoserine is present on Ser472. The residue at position 473 (Arg473) is a Citrulline. Ser474, Ser480, and Ser490 each carry phosphoserine. The interval 477-514 (GEVSGLMRKVPRVSLERLDLDLTSDSQPPVFKVFPGST) is HP1 box. Positions 482–495 (LMRKVPRVSLERLD) match the PxVxL motif motif. Phosphothreonine is present on Thr499. Ser502 bears the Phosphoserine mark. Lys508 participates in a covalent cross-link: Glycyl lysine isopeptide (Lys-Gly) (interchain with G-Cter in SUMO2). Lys555 is covalently cross-linked (Glycyl lysine isopeptide (Lys-Gly) (interchain with G-Cter in SUMO2); alternate). Residue Lys555 forms a Glycyl lysine isopeptide (Lys-Gly) (interchain with G-Cter in SUMO); alternate linkage. Lys576 participates in a covalent cross-link: Glycyl lysine isopeptide (Lys-Gly) (interchain with G-Cter in SUMO2). Ser595 bears the Phosphoserine mark. The PHD-type zinc finger occupies 626-673 (ATICRVCQKPGDLVMCNQCEFCFHLDCHLPSLQDVPGEEWSCSLCHVL). Residue Lys677 forms a Glycyl lysine isopeptide (Lys-Gly) (interchain with G-Cter in SUMO) linkage. Phosphoserine is present on residues Ser684, Ser690, and Ser698. The Bromo domain occupies 696–800 (KLSPANQRKC…RFFETRMNDA (105 aa)). Residue Lys751 forms a Glycyl lysine isopeptide (Lys-Gly) (interchain with G-Cter in SUMO2); alternate linkage. Residue Lys751 forms a Glycyl lysine isopeptide (Lys-Gly) (interchain with G-Cter in SUMO1); alternate linkage. Lys751 is covalently cross-linked (Glycyl lysine isopeptide (Lys-Gly) (interchain with G-Cter in SUMO); alternate). The residue at position 753 (Ser753) is a Phosphoserine. The residue at position 756 (Tyr756) is a Phosphotyrosine. Position 758 is a phosphoserine (Ser758). Lys771, Lys775, and Lys780 each carry N6-acetyllysine; alternate. Glycyl lysine isopeptide (Lys-Gly) (interchain with G-Cter in SUMO2); alternate cross-links involve residues Lys771, Lys775, and Lys780. Lys780 is covalently cross-linked (Glycyl lysine isopeptide (Lys-Gly) (interchain with G-Cter in SUMO1); alternate). The residue at position 785 (Ser785) is a Phosphoserine. Lys805 participates in a covalent cross-link: Glycyl lysine isopeptide (Lys-Gly) (interchain with G-Cter in SUMO2). Residue Ser825 is modified to Phosphoserine; by ATM and ATR and dsDNA kinase.

This sequence belongs to the TRIM/RBCC family. As to quaternary structure, interacts with ZNF382. Interacts with SETX. Oligomer; the RBCC domain homotrimerizes and interacts with one molecule of KRAB to form the KRAB-KAP1 corepressor complex. Binding to a KRAB domain is an absolute requirement for silencing gene expression. Interacts with CEBPB and NR3C1. Interacts with a number of KRAB-ZFP proteins including ZNF10, ZFP53, ZFP68 and ZNF256. Interacts with NCOR1, NR3C1 and CHD3. Interacts with CEBPB (via the RING-type and PHD-type zinc fingers). Component of a ternary complex that includes TRIM28, a HP1 protein (CBX1, CBX3 OR CBX5), a KRAB domain-containing protein, and DNA. Interacts with CBX5 (via the PxVxL motif); the interaction occurs in interphase nuclei and competes for binding POGZ. Interacts with POGZ; the interaction competes for interaction with CBX5. Interacts with SETDB1; the interaction is enhanced by KAP1 sumoylation, stimulates SETDB1 histone methyltransferase activity and gene silencing. Interacts (via the PHD-type zinc finger) with UBE2I; the interaction is required for sumoylation and repressor activity. Component of the TRIM28/KAP1-ERBB4-MDM2 complex involved in connecting growth factor and DNA damage responses. Interacts directly with ERBB4; the interaction represses ERBB4-mediated transcription activity. Interacts with MDM2; the interaction contributes to p53/TP53 inactivation. Component of the TRIM28/KAP1-MDM2-p53/TP53; involved in regulating p53/TP53 stabilization and activity. Interacts (via the leucine zipper alpha helical coiled-coil) with E2F1 (central region); the interaction inhibits E2F1 acetylation and transcriptional activity. Interacts with PPP1CA; the interaction dephosphorylates TRIM28 at Ser-824 and forms a complex at the p21 promoter site. Interacts with PPP1CB; the interaction is weak but is increased on dephosphorylation at Ser-824. Interacts with SMARCAD1. Interacts with, and sumoylates IRF7. Interacts with MAGEC2. Part of a complex composed of TRIM28, HDAC1, HDAC2 and EHMT2. Interacts with AICDA. The large PER complex involved in the histone methylation is composed of at least PER2, CBX3, TRIM28, SUV39H1 and/or SUV39H2; CBX3 mediates the formation of the complex. Interacts with NR4A3; the interactions potentiates NR4A3 activity on NurRE promoter. Interacts (unphosphorylated or phosphorylated form) with ZBTB1 (via BTB domain). Probably part of a corepressor complex containing ZNF304, TRIM28, SETDB1 and DNMT1. Interacts with ATRX. Forms a complex with ATRX, SETDB1 and ZNF274. Interacts with ZFP568; the interaction mediates ZFP568 transcriptional repression activity. Interacts with RRP1B. Interacts with CRY1. Interacts with ZNF263; recruited to the SIX3 promoter along with other proteins involved in chromatin modification and transcriptional corepression where it contributes to transcriptional repression. Interacts with CYREN (via XLF motif). Interacts with TRIM17; this interaction prevents TRIM28 activity. Interacts with ZNF746. Interacts with PHF13. Interacts with ZNF354C. Interacts with ZNF432; the interaction is independent of PARP1. In terms of processing, ATM-induced phosphorylation on Ser-825 represses sumoylation leading to the de-repression of expression of a subset of genes involved in cell cycle control and apoptosis in response to genotoxic stress. Dephosphorylation by the phosphatases, PPP1CA and PP1CB forms, allows sumoylation and expression of TRIM28 target genes. Post-translationally, sumoylation/desumoylation events regulate TRIM28-mediated transcriptional repression. Sumoylation is required for interaction with CHD3 and SETDB1 and the corepressor activity. Represses and is repressed by Ser-824 phosphorylation. Enhances the TRIM28 corepressor activity, inhibiting transcriptional activity of a number of genes including GADD45A and CDKN1A/p21. Lys-555, Lys-780 and Lys-805 are the major sites of sumoylation. In response to Dox-induced DNA damage, enhanced phosphorylation on Ser-825 prevents sumoylation and allows de-repression of CDKN1A/p21. Auto-ubiquitinated; enhanced by MAGEA2 and MAGEC2. In terms of processing, citrullinated by PADI4. Post-translationally, ADP-ribosylated by SIRT6, promoting TRIM28/KAP1 interaction with CBX5, thereby contributing to the packaging of LINE-1 retrotransposon elements into transcriptionally repressive heterochromatin.

The protein resides in the nucleus. It carries out the reaction S-ubiquitinyl-[E2 ubiquitin-conjugating enzyme]-L-cysteine + [acceptor protein]-L-lysine = [E2 ubiquitin-conjugating enzyme]-L-cysteine + N(6)-ubiquitinyl-[acceptor protein]-L-lysine.. It participates in protein modification; protein sumoylation. Functionally, nuclear corepressor for KRAB domain-containing zinc finger proteins (KRAB-ZFPs). Mediates gene silencing by recruiting CHD3, a subunit of the nucleosome remodeling and deacetylation (NuRD) complex, and SETDB1 (which specifically methylates histone H3 at 'Lys-9' (H3K9me)) to the promoter regions of KRAB target genes. Enhances transcriptional repression by coordinating the increase in H3K9me, the decrease in histone H3 'Lys-9 and 'Lys-14' acetylation (H3K9ac and H3K14ac, respectively) and the disposition of HP1 proteins to silence gene expression. Recruitment of SETDB1 induces heterochromatinization. May play a role as a coactivator for CEBPB and NR3C1 in the transcriptional activation of ORM1. Also a corepressor for ERBB4. Inhibits E2F1 activity by stimulating E2F1-HDAC1 complex formation and inhibiting E2F1 acetylation. May serve as a partial backup to prevent E2F1-mediated apoptosis in the absence of RB1. Important regulator of CDKN1A/p21(CIP1). Has E3 SUMO-protein ligase activity toward itself via its PHD-type zinc finger. Also specifically sumoylates IRF7, thereby inhibiting its transactivation activity. Ubiquitinates p53/TP53 leading to its proteasomal degradation; the function is enhanced by MAGEC2 and MAGEA2, and possibly MAGEA3 and MAGEA6. Mediates the nuclear localization of KOX1, ZNF268 and ZNF300 transcription factors. In association with isoform 2 of ZFP90, is required for the transcriptional repressor activity of FOXP3 and the suppressive function of regulatory T-cells (Treg). Probably forms a corepressor complex required for activated KRAS-mediated promoter hypermethylation and transcriptional silencing of tumor suppressor genes (TSGs) or other tumor-related genes in colorectal cancer (CRC) cells. Required to maintain a transcriptionally repressive state of genes in undifferentiated embryonic stem cells (ESCs). In ESCs, in collaboration with SETDB1, is also required for H3K9me3 and silencing of endogenous and introduced retroviruses in a DNA-methylation independent-pathway. Associates at promoter regions of tumor suppressor genes (TSGs) leading to their gene silencing. The SETDB1-TRIM28-ZNF274 complex may play a role in recruiting ATRX to the 3'-exons of zinc finger genes with atypical chromatin signatures to establish or maintain/protect H3K9me3 at these transcriptionally active regions. The sequence is that of Transcription intermediary factor 1-beta from Rattus norvegicus (Rat).